A 512-amino-acid chain; its full sequence is Capsid scaffolding protein (512 aa).

Active-site charge relay system residues include His-47, Ser-115, and His-131. The segment at 264–282 (DLISTICSTTHTTHHDLVR) is interaction with pAP. The segment at 376–407 (RGSQKRCAPTDSDDEMSFPGDPDYTTKKKKRY) is disordered. Residues 402–408 (KKKKRYR) carry the Nuclear localization signal motif. The interval 492–512 (DQSLLSLNKKLFVEALNKMDN) is interaction with major capsid protein.

This sequence belongs to the herpesviridae capsid scaffolding protein family. In terms of assembly, homomultimer. Interacts with major capsid protein. Exists in a monomer-dimer equilibrium with the dimer being the active species. In terms of processing, capsid scaffolding protein is cleaved by assemblin after formation of the spherical procapsid. As a result, the capsid obtains its mature, icosahedral shape. Cleavages occur at two or more sites: release (R-site) and maturation (M-site).

The protein resides in the host cytoplasm. It is found in the host nucleus. It catalyses the reaction Cleaves -Ala-|-Ser- and -Ala-|-Ala- bonds in the scaffold protein.. In terms of biological role, acts as a scaffold protein by binding major capsid protein in the cytoplasm, inducing the nuclear localization of both proteins. Multimerizes in the nucleus such as major capsid protein forms the icosahedral T=16 capsid. Autocatalytic cleavage releases the assembly protein, and subsequently abolishes interaction with major capsid protein. Cleavages products are evicted from the capsid before or during DNA packaging. Its function is as follows. Protease that plays an essential role in virion assembly within the nucleus. Catalyzes the cleavage of the assembly protein after formation of the spherical procapsid. By that cleavage, the capsid matures and gains its icosahedral shape. The cleavage sites seem to include -Ala-Ser-, -Ala-Ala-, as well as Ala-Thr bonds. Assemblin and cleavages products are evicted from the capsid before or during DNA packaging. Plays a major role in capsid assembly. Acts as a scaffold protein by binding major capsid protein. Multimerizes in the nucleus such as major capsid protein forms the icosahedral T=16 capsid. Cleaved by assemblin after capsid completion. The cleavages products are evicted from the capsid before or during DNA packaging. The chain is Capsid scaffolding protein (U53) from Human herpesvirus 7 (strain JI) (HHV-7).